A 449-amino-acid chain; its full sequence is Serum response factor homolog (449 aa).

The segment at 23 to 166 (LADPADMYGN…PPANGKKTKG (144 aa)) is disordered. The segment covering 69-80 (QCQTLHSPQHAS) has biased composition (polar residues). The span at 81–107 (QQQQQQQQQQQQHQQQQQQQQQHPQQQ) shows a compositional bias: low complexity. Ser-156 is subject to Phosphoserine. The MADS-box domain occupies 167–225 (RVKIKMEYIDNKLRRYTTFSKRKTGIMKKAYELSTLTGTQVMLLVASETGHVYTFATRK). 2 disordered regions span residues 270-360 (YNIA…GGGS) and 418-449 (LTAS…QEFD). Composition is skewed to low complexity over residues 317-331 (SAPP…TASS) and 345-354 (TNSGPSTSTA).

After germ band retraction, high levels of zygotic expression are observed in a distinct subset of peripheral tracheal cells distributed throughout the embryo and low levels in somatic muscle. Expressed in the future intervein tissue of the wing imaginal disk from the third instar larvae until eclosion of the adult fly (at protein level).

It is found in the nucleus. Required for the formation of intervein tissue of the wing. Acts in a dosage-dependent manner to suppress wing vein formation and promote development of intervein cells. Might play a role in the proper formation and maintenance of the trachea. This Drosophila melanogaster (Fruit fly) protein is Serum response factor homolog (bs).